The chain runs to 418 residues: Gamma-glutamyl phosphate reductase (418 aa).

The protein belongs to the gamma-glutamyl phosphate reductase family.

Its subcellular location is the cytoplasm. The catalysed reaction is L-glutamate 5-semialdehyde + phosphate + NADP(+) = L-glutamyl 5-phosphate + NADPH + H(+). The protein operates within amino-acid biosynthesis; L-proline biosynthesis; L-glutamate 5-semialdehyde from L-glutamate: step 2/2. Its function is as follows. Catalyzes the NADPH-dependent reduction of L-glutamate 5-phosphate into L-glutamate 5-semialdehyde and phosphate. The product spontaneously undergoes cyclization to form 1-pyrroline-5-carboxylate. The polypeptide is Gamma-glutamyl phosphate reductase (Thermobifida fusca (strain YX)).